The chain runs to 500 residues: MINVSFLGLMSGISVLLKTTVIVVGIFEGSNHLEDNGALEGYNDKIMEIVNGYQSFDGKFAEVLPIIGLEKDFPVVVVIGLGKSEDFDENKALKVGGVIYSELNRMKIPDASIVINTDSNVSANIGYGALLRSFKFDKYFVEKKDKNSVYLNKLVLFSKSEPQEVTALFNDLKAEGESIFLARSFVSEPPNILYPETYAQMIYEELSKVGVTVEVFDEDYMKANQMMALLGVGQGSAKKSRLVVMKWNGGDESESPIAFVGKGVTFDTGGISLKPSKGMWDMKYDMAGSASVVGIMRTLAARKAKVNAVGVVGLVENSVDGNAQRPSDVVISMSGQTIEVLNTDAEGRLVLADALWYTQEMFTPKLMVDLATLTGAVVVALGNNQYAGLFSNDDAIANQLIVAGNESGEKLWRLPLDEAYDKLIDSSIADMQNISTKGYGADSITAAQFLQRFVNGVPWVHLDIAGMAWDYEGTEICPKGATGFGVRLLNRFVSKYYESH.

Mn(2+)-binding residues include Lys-262 and Asp-267. Lys-274 is an active-site residue. Residues Asp-285, Asp-344, and Glu-346 each coordinate Mn(2+). Residue Arg-348 is part of the active site.

This sequence belongs to the peptidase M17 family. It depends on Mn(2+) as a cofactor.

The protein localises to the cytoplasm. It catalyses the reaction Release of an N-terminal amino acid, Xaa-|-Yaa-, in which Xaa is preferably Leu, but may be other amino acids including Pro although not Arg or Lys, and Yaa may be Pro. Amino acid amides and methyl esters are also readily hydrolyzed, but rates on arylamides are exceedingly low.. The enzyme catalyses Release of an N-terminal amino acid, preferentially leucine, but not glutamic or aspartic acids.. Functionally, presumably involved in the processing and regular turnover of intracellular proteins. Catalyzes the removal of unsubstituted N-terminal amino acids from various peptides. The sequence is that of Probable cytosol aminopeptidase from Ehrlichia ruminantium (strain Welgevonden).